We begin with the raw amino-acid sequence, 369 residues long: Probable trehalose-phosphate phosphatase D (369 aa).

Residues 63-85 (RASSPTRTRPGNISPLPESDEED) form a disordered region.

Belongs to the trehalose phosphatase family. A divalent metal cation is required as a cofactor.

The catalysed reaction is alpha,alpha-trehalose 6-phosphate + H2O = alpha,alpha-trehalose + phosphate. The protein operates within glycan biosynthesis; trehalose biosynthesis. Removes the phosphate from trehalose 6-phosphate to produce free trehalose. Trehalose accumulation in plant may improve abiotic stress tolerance. This chain is Probable trehalose-phosphate phosphatase D (TPPD), found in Arabidopsis thaliana (Mouse-ear cress).